The primary structure comprises 340 residues: Ferredoxin--NADP reductase (340 aa).

Positions 33, 41, 46, 86, 120, 286, and 327 each coordinate FAD.

Belongs to the ferredoxin--NADP reductase type 2 family. As to quaternary structure, homodimer. FAD serves as cofactor.

It carries out the reaction 2 reduced [2Fe-2S]-[ferredoxin] + NADP(+) + H(+) = 2 oxidized [2Fe-2S]-[ferredoxin] + NADPH. In Rickettsia rickettsii (strain Iowa), this protein is Ferredoxin--NADP reductase.